Consider the following 726-residue polypeptide: WD repeat and coiled-coil-containing protein (726 aa).

WD repeat units lie at residues 55–98 (GQFE…SDKN) and 154–194 (KSSG…LNAC). Residues 502-574 (RSYDGDQSPT…PNFIQPSDVS (73 aa)) form a disordered region. The span at 506–515 (GDQSPTSSAN) shows a compositional bias: polar residues. Residues 517 to 533 (FDEKRNRLRMESFDTEP) are compositionally biased toward basic and acidic residues. Polar residues predominate over residues 550 to 574 (SGSTSPKSECQNSSPPNFIQPSDVS). A coiled-coil region spans residues 581–609 (SISRNVERLCCNFAHLQQHLSELTDITRN).

The protein is WD repeat and coiled-coil-containing protein (wdcp) of Xenopus laevis (African clawed frog).